The chain runs to 104 residues: Co-chaperonin GroES 2 (104 aa).

This sequence belongs to the GroES chaperonin family. As to quaternary structure, heptamer of 7 subunits arranged in a ring. Interacts with the chaperonin GroEL.

Its subcellular location is the cytoplasm. Its function is as follows. Together with the chaperonin GroEL, plays an essential role in assisting protein folding. The GroEL-GroES system forms a nano-cage that allows encapsulation of the non-native substrate proteins and provides a physical environment optimized to promote and accelerate protein folding. GroES binds to the apical surface of the GroEL ring, thereby capping the opening of the GroEL channel. The chain is Co-chaperonin GroES 2 from Rhodopseudomonas palustris (strain ATCC BAA-98 / CGA009).